The following is an 88-amino-acid chain: Small ribosomal subunit protein bS16 (88 aa).

It belongs to the bacterial ribosomal protein bS16 family.

This is Small ribosomal subunit protein bS16 from Geotalea daltonii (strain DSM 22248 / JCM 15807 / FRC-32) (Geobacter daltonii).